We begin with the raw amino-acid sequence, 308 residues long: Ribosomal RNA large subunit methyltransferase F (308 aa).

It belongs to the methyltransferase superfamily. METTL16/RlmF family.

Its subcellular location is the cytoplasm. It catalyses the reaction adenosine(1618) in 23S rRNA + S-adenosyl-L-methionine = N(6)-methyladenosine(1618) in 23S rRNA + S-adenosyl-L-homocysteine + H(+). Specifically methylates the adenine in position 1618 of 23S rRNA. This chain is Ribosomal RNA large subunit methyltransferase F, found in Salmonella paratyphi A (strain ATCC 9150 / SARB42).